The sequence spans 256 residues: MQRAKEVMKVSDGSLLGEPGRTPLSKKEGVKWQRPRLTRQALMRCCLVKWILSSAAPQGSYSSDSELELSAVRHQPEGLDQLQAQTKFTKKELQSLYRGFKNECPTGLVDEDTFKLIYSQFFPQGDATTYAHFLFNAFDADGNGAIRFEDFVVGLSILLRGTVHEKLKWAFNLYDINKDGYITKEEMLAIMKSIYDMMGRHTYPILREDAPLEHVERFFQKMDRNQDGVVTIDEFLETCQKDENIMSSMQLFENVI.

Residues 1–30 form a disordered region; it reads MQRAKEVMKVSDGSLLGEPGRTPLSKKEGV. Residue serine 14 is modified to Phosphoserine. Lysine 26 is covalently cross-linked (Glycyl lysine isopeptide (Lys-Gly) (interchain with G-Cter in SUMO1)). Residues cysteine 45 and cysteine 46 are each lipidated (S-palmitoyl cysteine). A phosphoserine mark is found at serine 60 and serine 63. The EF-hand 1; degenerate domain occupies 67 to 123; the sequence is LELSAVRHQPEGLDQLQAQTKFTKKELQSLYRGFKNECPTGLVDEDTFKLIYSQFFP. Residue lysine 90 forms a Glycyl lysine isopeptide (Lys-Gly) (interchain with G-Cter in SUMO1) linkage. EF-hand domains follow at residues 126 to 161, 162 to 197, and 210 to 245; these read DATT…LLRG, TVHE…IYDM, and APLE…DENI. Positions 175, 177, 179, 181, 186, 223, 225, 227, and 234 each coordinate Ca(2+). The segment at 243-256 is interaction with KCND2; sequence ENIMSSMQLFENVI.

This sequence belongs to the recoverin family. Binds to DNA as a homomultimer. Dimerization is induced by binding to calcium. Interacts with the C-terminus of PSEN1 and PSEN2 and with PSEN2 CTF subunit. Associates with KCN1. Component of heteromultimeric potassium channels. Identified in potassium channel complexes containing KCND1, KCND2, KCND3, KCNIP1, KCNIP2, KCNIP3, KCNIP4, DPP6 and DPP10. Interacts with KCND2 and KCND3. In terms of processing, palmitoylated. Palmitoylation enhances association with the plasma membrane. Post-translationally, proteolytically cleaved by caspase-3.

It localises to the cytoplasm. The protein resides in the cell membrane. Its subcellular location is the endoplasmic reticulum. It is found in the golgi apparatus. The protein localises to the nucleus. Functionally, regulatory subunit of Kv4/D (Shal)-type voltage-gated rapidly inactivating A-type potassium channels, such as KCND2/Kv4.2 and KCND3/Kv4.3. Modulates channel expression at the cell membrane, gating characteristics, inactivation kinetics and rate of recovery from inactivation in a calcium-dependent and isoform-specific manner. May play a role in the regulation of PSEN2 proteolytic processing and apoptosis. Together with PSEN2 involved in modulation of amyloid-beta formation. In terms of biological role, calcium-dependent transcriptional repressor that binds to the DRE element of genes including PDYN and FOS. Affinity for DNA is reduced upon binding to calcium and enhanced by binding to magnesium. Seems to be involved in nociception. The protein is Calsenilin (KCNIP3) of Bos taurus (Bovine).